A 163-amino-acid chain; its full sequence is MKAKGFVHKYGDNVDTDVIIPARYLNTANHKELAAHCMEDIDKDFVKKVKTGDIMVGGDNFGCGSSREHAPIAIKESGISCVIASSFARIFYRNSINIGLAILECDEASKKISDNDEVEVDFDNGLIKNITKNETYKAEPFPEFIKKIINSNGLLNSIKNSKG.

Belongs to the LeuD family. LeuD type 2 subfamily. In terms of assembly, heterodimer of LeuC and LeuD.

It carries out the reaction (2R,3S)-3-isopropylmalate = (2S)-2-isopropylmalate. It functions in the pathway amino-acid biosynthesis; L-leucine biosynthesis; L-leucine from 3-methyl-2-oxobutanoate: step 2/4. Functionally, catalyzes the isomerization between 2-isopropylmalate and 3-isopropylmalate, via the formation of 2-isopropylmaleate. This Brachyspira hyodysenteriae (strain ATCC 49526 / WA1) protein is 3-isopropylmalate dehydratase small subunit.